We begin with the raw amino-acid sequence, 340 residues long: S-adenosylmethionine:tRNA ribosyltransferase-isomerase (340 aa).

Belongs to the QueA family. As to quaternary structure, monomer.

It is found in the cytoplasm. The catalysed reaction is 7-aminomethyl-7-carbaguanosine(34) in tRNA + S-adenosyl-L-methionine = epoxyqueuosine(34) in tRNA + adenine + L-methionine + 2 H(+). It participates in tRNA modification; tRNA-queuosine biosynthesis. Transfers and isomerizes the ribose moiety from AdoMet to the 7-aminomethyl group of 7-deazaguanine (preQ1-tRNA) to give epoxyqueuosine (oQ-tRNA). This chain is S-adenosylmethionine:tRNA ribosyltransferase-isomerase, found in Macrococcus caseolyticus (strain JCSC5402) (Macrococcoides caseolyticum).